Here is a 44-residue protein sequence, read N- to C-terminus: Cytochrome b559 subunit beta (44 aa).

Residues 19–35 (WVSIHALAVPTIFFLGS) traverse the membrane as a helical segment. Residue His23 coordinates heme.

It belongs to the PsbE/PsbF family. In terms of assembly, heterodimer of an alpha subunit and a beta subunit. PSII is composed of 1 copy each of membrane proteins PsbA, PsbB, PsbC, PsbD, PsbE, PsbF, PsbH, PsbI, PsbJ, PsbK, PsbL, PsbM, PsbT, PsbX, PsbY, PsbZ, Psb30/Ycf12, at least 3 peripheral proteins of the oxygen-evolving complex and a large number of cofactors. It forms dimeric complexes. It depends on heme b as a cofactor.

It is found in the plastid. Its subcellular location is the chloroplast thylakoid membrane. Its function is as follows. This b-type cytochrome is tightly associated with the reaction center of photosystem II (PSII). PSII is a light-driven water:plastoquinone oxidoreductase that uses light energy to abstract electrons from H(2)O, generating O(2) and a proton gradient subsequently used for ATP formation. It consists of a core antenna complex that captures photons, and an electron transfer chain that converts photonic excitation into a charge separation. The sequence is that of Cytochrome b559 subunit beta from Chlamydomonas moewusii (Chlamydomonas eugametos).